Reading from the N-terminus, the 159-residue chain is Ribosomal RNA large subunit methyltransferase H (159 aa).

S-adenosyl-L-methionine is bound by residues L76, G108, and F127 to F132.

This sequence belongs to the RNA methyltransferase RlmH family. In terms of assembly, homodimer.

The protein resides in the cytoplasm. It carries out the reaction pseudouridine(1915) in 23S rRNA + S-adenosyl-L-methionine = N(3)-methylpseudouridine(1915) in 23S rRNA + S-adenosyl-L-homocysteine + H(+). Its function is as follows. Specifically methylates the pseudouridine at position 1915 (m3Psi1915) in 23S rRNA. The chain is Ribosomal RNA large subunit methyltransferase H from Streptococcus thermophilus (strain ATCC BAA-491 / LMD-9).